The following is a 1637-amino-acid chain: Acrosomal protein KIAA1210 (1637 aa).

Disordered stretches follow at residues Arg44 to Ser121, Arg141 to Trp293, Pro341 to Asp404, Val438 to Glu759, Pro865 to Thr896, Ser935 to Leu975, Leu1017 to Gln1057, Phe1090 to Ala1137, Ser1182 to Phe1238, and Asn1539 to Ser1558. Residues His103 to Arg114 show a composition bias toward basic residues. Residues Arg141 to Thr156 show a composition bias toward low complexity. The segment covering Ser170–Leu190 has biased composition (polar residues). The span at Ala229–Ser249 shows a compositional bias: basic and acidic residues. Positions Thr250–Thr261 are enriched in low complexity. Positions Pro341 to Lys353 are enriched in polar residues. Positions Pro355–Lys374 are enriched in basic and acidic residues. A compositionally biased stretch (low complexity) spans Thr508–Glu526. A compositionally biased stretch (acidic residues) spans Ala550–Asn572. The segment covering Asp689–Gln698 has biased composition (low complexity). 5 stretches are compositionally biased toward polar residues: residues Ser745–Glu759, Gly879–Thr896, Ser935–Ala956, Ser964–Leu975, and Leu1017–Val1030.

As to quaternary structure, interacts with TOP2B. As to expression, predominantly expressed in testis (at protein level).

Its subcellular location is the cytoplasmic vesicle. It localises to the secretory vesicle. The protein localises to the acrosome. This Mus musculus (Mouse) protein is Acrosomal protein KIAA1210.